The primary structure comprises 241 residues: 1-(5-phosphoribosyl)-5-[(5-phosphoribosylamino)methylideneamino] imidazole-4-carboxamide isomerase (241 aa).

Residue D8 is the Proton acceptor of the active site. D129 acts as the Proton donor in catalysis.

It belongs to the HisA/HisF family.

The protein localises to the cytoplasm. The catalysed reaction is 1-(5-phospho-beta-D-ribosyl)-5-[(5-phospho-beta-D-ribosylamino)methylideneamino]imidazole-4-carboxamide = 5-[(5-phospho-1-deoxy-D-ribulos-1-ylimino)methylamino]-1-(5-phospho-beta-D-ribosyl)imidazole-4-carboxamide. It participates in amino-acid biosynthesis; L-histidine biosynthesis; L-histidine from 5-phospho-alpha-D-ribose 1-diphosphate: step 4/9. In Chloroflexus aggregans (strain MD-66 / DSM 9485), this protein is 1-(5-phosphoribosyl)-5-[(5-phosphoribosylamino)methylideneamino] imidazole-4-carboxamide isomerase.